Here is a 291-residue protein sequence, read N- to C-terminus: Cell division control protein 2 homolog 1 (291 aa).

A Protein kinase domain is found at 1-284; that stretch reads GENVEKIGEG…ARSAVEHEYF (284 aa). ATP is bound by residues 7–15 and Lys-30; that span reads IGEGTYGVV. Position 11 is a phosphothreonine (Thr-11). At Tyr-12 the chain carries Phosphotyrosine. Asp-124 serves as the catalytic Proton acceptor. Thr-158 bears the Phosphothreonine; by CAK mark.

Belongs to the protein kinase superfamily. CMGC Ser/Thr protein kinase family. CDC2/CDKX subfamily. In terms of tissue distribution, found in most organs including root, young leaf, stem, vegetative meristem and flower bud.

The enzyme catalyses L-seryl-[protein] + ATP = O-phospho-L-seryl-[protein] + ADP + H(+). It catalyses the reaction L-threonyl-[protein] + ATP = O-phospho-L-threonyl-[protein] + ADP + H(+). It carries out the reaction [DNA-directed RNA polymerase] + ATP = phospho-[DNA-directed RNA polymerase] + ADP + H(+). With respect to regulation, phosphorylation at Thr-11 or Tyr-12 inactivates the enzyme, while phosphorylation at Thr-158 activates it. Its function is as follows. Plays a key role in the control of the eukaryotic cell cycle. Component of the kinase complex that phosphorylates the repetitive C-terminus of RNA polymerase II. The protein is Cell division control protein 2 homolog 1 (CDC2A) of Medicago sativa (Alfalfa).